We begin with the raw amino-acid sequence, 393 residues long: Peroxisome biogenesis protein 12 (393 aa).

Residues 1–13 (MLFQVGGEGTRPT) lie on the Peroxisomal matrix side of the membrane. Residues 14–41 (FFEMAAAQQLPASLRAALTYSLGVFALR) form a helical membrane-spanning segment. The Cytoplasmic portion of the chain corresponds to 42 to 44 (RSF). The helical transmembrane segment at 45–69 (LHKILDYEDEFFAALMLILEGHSLR) threads the bilayer. Over 70-110 (TTDGSFAESLYGLRRKSARLRLRKDSARKDSSEEVQHSGLE) the chain is Peroxisomal matrix. A helical membrane pass occupies residues 111 to 148 (KRQRILSVVFLVVLPYFKSKLHAIYNKEREARLRESLW). Topologically, residues 149–168 (GAEDQGFDEADFFTGDDSIV) are cytoplasmic. A helical membrane pass occupies residues 169–214 (SREPSGNEELSVRVQLATKIKKFIAVCYPWIHASSEGLSFTYQLLY). Residues 215–285 (LLDATGFYSL…SYAVLDYAQT (71 aa)) lie on the Peroxisomal matrix side of the membrane. The helical transmembrane segment at 286-312 (GLIAAVFIFKMMEWWYQSAEERLSAPT) threads the bilayer. Topologically, residues 313–393 (VYPPPPPPPA…DQIRRLFQDT (81 aa)) are cytoplasmic. Zn(2+) is bound by residues C339, C342, C360, and C363. The segment at 339 to 378 (CALCLQKRANPSVVTVSGFVFCYSCVFKYVSKYKRCPVTL) adopts an RING-type; degenerate zinc-finger fold.

The protein belongs to the pex2/pex10/pex12 family. Component of the PEX2-PEX10-PEX12 retrotranslocation channel. Interacts (via C-terminus) with PEX7. Interacts with DSK2a and DSK2b. In terms of tissue distribution, expressed in young seedlings, roots, leaves, seeds and flowers.

The protein localises to the peroxisome membrane. The protein operates within protein modification; protein ubiquitination. Component of a retrotranslocation channel required for peroxisome organization by mediating export of the PEX5 receptor from peroxisomes to the cytosol, thereby promoting PEX5 recycling. The retrotranslocation channel is composed of PEX2, PEX10 and PEX12; each subunit contributing transmembrane segments that coassemble into an open channel that specifically allows the passage of PEX5 through the peroxisomal membrane. PEX12 also regulates PEX5 recycling by activating the E3 ubiquitin-protein ligase activity of PEX10. When PEX5 recycling is compromised, PEX12 stimulates PEX10-mediated polyubiquitination of PEX5, leading to its subsequent degradation. This Arabidopsis thaliana (Mouse-ear cress) protein is Peroxisome biogenesis protein 12 (PEX12).